The chain runs to 130 residues: Keratin, high-sulfur matrix protein, IIIA3A (130 aa).

As to expression, wool.

Its function is as follows. The keratin products of mammalian epidermal derivatives such as wool and hair consist of microfibrils embedded in a rigid matrix of other proteins. The matrix proteins include the high-sulfur and high-tyrosine keratins, having molecular weights of 6-20 kDa, whereas the microfibrils contain the larger, low-sulfur keratins (40-56 kDa). The sequence is that of Keratin, high-sulfur matrix protein, IIIA3A from Ovis aries (Sheep).